A 346-amino-acid polypeptide reads, in one-letter code: Glycosyltransferase 1 domain-containing protein 1 (346 aa).

The signal sequence occupies residues 1–16 (MRLLFLAVLRPHTGNA).

Belongs to the glycosyltransferase group 1 family. Glycosyltransferase 4 subfamily.

The protein localises to the secreted. This chain is Glycosyltransferase 1 domain-containing protein 1 (GLT1D1), found in Homo sapiens (Human).